Here is a 36-residue protein sequence, read N- to C-terminus: Pancreatic polypeptide (36 aa).

A Tyrosine amide modification is found at Tyr36.

This sequence belongs to the NPY family.

Its subcellular location is the secreted. Its function is as follows. Hormone secreted by pancreatic cells that acts as a regulator of pancreatic and gastrointestinal functions probably by signaling through the G protein-coupled receptor NPY4R2. The polypeptide is Pancreatic polypeptide (PPY) (Equus przewalskii (Przewalski's horse)).